We begin with the raw amino-acid sequence, 334 residues long: tRNA-dihydrouridine synthase B (334 aa).

Residues 16-18 and Gln70 contribute to the FMN site; that span reads PMA. Residue Cys100 is the Proton donor of the active site. FMN contacts are provided by residues Lys139, 200-202, and 224-225; these read NGD and GR.

It belongs to the Dus family. DusB subfamily. FMN is required as a cofactor.

The enzyme catalyses a 5,6-dihydrouridine in tRNA + NAD(+) = a uridine in tRNA + NADH + H(+). It carries out the reaction a 5,6-dihydrouridine in tRNA + NADP(+) = a uridine in tRNA + NADPH + H(+). Functionally, catalyzes the synthesis of 5,6-dihydrouridine (D), a modified base found in the D-loop of most tRNAs, via the reduction of the C5-C6 double bond in target uridines. In Serratia marcescens, this protein is tRNA-dihydrouridine synthase B.